We begin with the raw amino-acid sequence, 205 residues long: Large ribosomal subunit protein uL3c (205 aa).

Residues 129–154 form a disordered region; it reads SRGPMSHGSKNHRQPGSIGAGTTPGR.

This sequence belongs to the universal ribosomal protein uL3 family. In terms of assembly, part of the 50S ribosomal subunit.

The protein resides in the plastid. It localises to the chloroplast. In terms of biological role, one of the primary rRNA binding proteins, it binds directly near the 3'-end of the 23S rRNA, where it nucleates assembly of the 50S subunit. The chain is Large ribosomal subunit protein uL3c (rpl3) from Pyropia yezoensis (Susabi-nori).